A 371-amino-acid polypeptide reads, in one-letter code: Cytochrome b (371 aa).

Transmembrane regions (helical) follow at residues 25–45 (FGSM…FLAV), 69–90 (WLMQ…YIHI), 105–125 (WMSG…GYVL), and 170–190 (FFAL…LHII). Residues H75 and H89 each contribute to the heme b site. Positions 174 and 188 each coordinate heme b. H193 lines the a ubiquinone pocket. The next 4 membrane-spanning stretches (helical) occupy residues 218–238 (YKDL…VSFF), 280–300 (LGGA…PLTH), 312–332 (LSQL…WAAT), and 339–358 (YIII…ISTP).

It belongs to the cytochrome b family. In terms of assembly, the cytochrome bc1 complex contains 3 respiratory subunits (MT-CYB, CYC1 and UQCRFS1), 2 core proteins (UQCRC1 and UQCRC2) and probably 6 low-molecular weight proteins. It depends on heme b as a cofactor.

Its subcellular location is the mitochondrion inner membrane. Functionally, component of the ubiquinol-cytochrome c reductase complex (complex III or cytochrome b-c1 complex) that is part of the mitochondrial respiratory chain. The b-c1 complex mediates electron transfer from ubiquinol to cytochrome c. Contributes to the generation of a proton gradient across the mitochondrial membrane that is then used for ATP synthesis. This chain is Cytochrome b (MT-CYB), found in Python regius (Ball python).